Here is a 97-residue protein sequence, read N- to C-terminus: NADH-ubiquinone oxidoreductase chain 4L (97 aa).

The next 3 membrane-spanning stretches (helical) occupy residues 1–21 (MALLIVILSMFYLGLMGILLN), 25–45 (FLSILLCLELLLISLFIGIAI), and 60–80 (LFVLTLVACEASIGLSLMVGL).

This sequence belongs to the complex I subunit 4L family.

It localises to the mitochondrion membrane. The catalysed reaction is a ubiquinone + NADH + 5 H(+)(in) = a ubiquinol + NAD(+) + 4 H(+)(out). Its function is as follows. Core subunit of the mitochondrial membrane respiratory chain NADH dehydrogenase (Complex I) that is believed to belong to the minimal assembly required for catalysis. Complex I functions in the transfer of electrons from NADH to the respiratory chain. The immediate electron acceptor for the enzyme is believed to be ubiquinone. This is NADH-ubiquinone oxidoreductase chain 4L (ND4L) from Strongylocentrotus purpuratus (Purple sea urchin).